The following is a 60-amino-acid chain: Metallothionein A (60 aa).

The interval 1 to 28 is beta; that stretch reads MDPCECSKSGNCNCGGSCTCTNCSCKSC. The a divalent metal cation site is built by cysteine 4, cysteine 6, cysteine 12, cysteine 14, cysteine 18, cysteine 20, cysteine 23, cysteine 25, cysteine 28, cysteine 32, cysteine 33, cysteine 35, cysteine 36, cysteine 40, cysteine 43, cysteine 47, cysteine 49, cysteine 54, cysteine 58, and cysteine 59. Residues 29–60 are alpha; the sequence is KKSCCPCCPSGCTKCASGCVCKGKTCDTSCCQ.

This sequence belongs to the metallothionein superfamily. Type 1 family.

Its function is as follows. Metallothioneins have a high content of cysteine residues that bind various heavy metals. This is Metallothionein A (mta) from Parachaenichthys charcoti (Charcot's dragonfish).